The sequence spans 84 residues: Cell division topological specificity factor (84 aa).

The protein belongs to the MinE family.

In terms of biological role, prevents the cell division inhibition by proteins MinC and MinD at internal division sites while permitting inhibition at polar sites. This ensures cell division at the proper site by restricting the formation of a division septum at the midpoint of the long axis of the cell. This chain is Cell division topological specificity factor, found in Pseudomonas putida (strain ATCC 700007 / DSM 6899 / JCM 31910 / BCRC 17059 / LMG 24140 / F1).